Consider the following 375-residue polypeptide: Chaperone protein DnaJ (375 aa).

One can recognise a J domain in the interval 5–70; the sequence is DYYEVLGVNR…QKKGAYDRYG (66 aa). Residues 134–212 form a CR-type zinc finger; it reads GAEKTIRIPT…CGGAGRVKKQ (79 aa). Zn(2+) contacts are provided by cysteine 147, cysteine 150, cysteine 164, cysteine 167, cysteine 186, cysteine 189, cysteine 200, and cysteine 203. 4 CXXCXGXG motif repeats span residues 147–154, 164–171, 186–193, and 200–207; these read CGTCHGSG, CPTCGGAG, CPKCHGTG, and CGDCGGAG.

It belongs to the DnaJ family. In terms of assembly, homodimer. Zn(2+) serves as cofactor.

The protein resides in the cytoplasm. Functionally, participates actively in the response to hyperosmotic and heat shock by preventing the aggregation of stress-denatured proteins and by disaggregating proteins, also in an autonomous, DnaK-independent fashion. Unfolded proteins bind initially to DnaJ; upon interaction with the DnaJ-bound protein, DnaK hydrolyzes its bound ATP, resulting in the formation of a stable complex. GrpE releases ADP from DnaK; ATP binding to DnaK triggers the release of the substrate protein, thus completing the reaction cycle. Several rounds of ATP-dependent interactions between DnaJ, DnaK and GrpE are required for fully efficient folding. Also involved, together with DnaK and GrpE, in the DNA replication of plasmids through activation of initiation proteins. In Azoarcus sp. (strain BH72), this protein is Chaperone protein DnaJ.